Reading from the N-terminus, the 598-residue chain is MVDWASDSDNDKFEWDTDGEAETSSAPALRNIDAPGPSTRLPQDANGKANGSGALVAEFMGMGFPKEMILKAIKEIGDTDTEQLLELLLTYQAIGGDASVGNCSASACAPQTLEVDEEEDDTNWDEYDTAGNCDRTPHSDGSGDEDFFQEMSEKDEKMKSLVNMGFPEDEAKMAIDRCGLDAPVAVLVDSIYASQEAGNGYSANLSDYEDTEFSSFGGRKKTRFVDGSKKRKRYGSGPSGNQVPFDGSHEEPMPLPNPMVGFSLPNERLRSVHRNLPDQALGPPFFYYENVALAPKGVWTTISRFLYDIQPEFVDSKYFCAAARKRGYIHNLPIENRSPVLPMPPKTISEAFPNTKRWWPSWDPRRQFNCLQTCMASAKLTERIRCALGRFSDVPTPQVQKYVLDECRKWNLVWVGKNKVAPLEPDEMEFLLGYPRNHTRGVSRTERYRALGNSFQVDTVAYHLSVLRDLFPNGMNVLSLFSGIGGAEVALHRLGIHMKTVISVEKSEVNRTILKSWWDQTQTGTLIEIADVRHLTTERIETFIRRFGGFDLVIGGSPCNNLAGSNRHHRDGLEGEHSALFYDYIRILEHVKATMSAV.

Disordered regions lie at residues 1–49 and 114–146; these read MVDW…NGKA and EVDEEEDDTNWDEYDTAGNCDRTPHSDGSGDED. Positions 42–91 constitute a UBA 1 domain; it reads PQDANGKANGSGALVAEFMGMGFPKEMILKAIKEIGDTDTEQLLELLLTY. Acidic residues predominate over residues 114–128; the sequence is EVDEEEDDTNWDEYD. Residues 150–194 enclose the UBA 2 domain; the sequence is EMSEKDEKMKSLVNMGFPEDEAKMAIDRCGLDAPVAVLVDSIYAS. The tract at residues 227–252 is disordered; that stretch reads GSKKRKRYGSGPSGNQVPFDGSHEEP. Residues 272-598 form the SAM-dependent MTase DRM-type domain; the sequence is VHRNLPDQAL…EHVKATMSAV (327 aa).

It belongs to the class I-like SAM-binding methyltransferase superfamily. DRM-methyltransferase family. As to quaternary structure, interacts (via UBA domains) with EIF4A.

The protein resides in the nucleus. The catalysed reaction is a 2'-deoxycytidine in DNA + S-adenosyl-L-methionine = a 5-methyl-2'-deoxycytidine in DNA + S-adenosyl-L-homocysteine + H(+). In terms of biological role, involved in de novo DNA methylation. Required for CpG and non-CpG methylation. Required for normal establishment and maintenance of RNA-directed DNA methylation (RdDM) mediated by small interfering RNAs (siRNAs). Regulates proper plant development in both vegetative and reproductive stages through DNA methylation. The protein is DNA (cytosine-5)-methyltransferase DRM2 of Oryza sativa subsp. japonica (Rice).